We begin with the raw amino-acid sequence, 98 residues long: Ubiquitin-related modifier 1 (98 aa).

G98 is modified (1-thioglycine). G98 is covalently cross-linked (Glycyl lysine isopeptide (Gly-Lys) (interchain with K-? in acceptor proteins)).

It belongs to the URM1 family. In terms of processing, C-terminal thiocarboxylation occurs in 2 steps, it is first acyl-adenylated (-COAMP) via the hesA/moeB/thiF part of UBA4, then thiocarboxylated (-COSH) via the rhodanese domain of UBA4.

Its subcellular location is the cytoplasm. Its pathway is tRNA modification; 5-methoxycarbonylmethyl-2-thiouridine-tRNA biosynthesis. Its function is as follows. Acts as a sulfur carrier required for 2-thiolation of mcm(5)S(2)U at tRNA wobble positions of cytosolic tRNA(Lys), tRNA(Glu) and tRNA(Gln). Serves as sulfur donor in tRNA 2-thiolation reaction by being thiocarboxylated (-COSH) at its C-terminus by the MOCS3 homolog UBA4. The sulfur is then transferred to tRNA to form 2-thiolation of mcm(5)S(2)U. Prior mcm(5) tRNA modification by the elongator complex is required for 2-thiolation. Also acts as a ubiquitin-like protein (UBL) that is covalently conjugated via an isopeptide bond to lysine residues of target proteins such as AHP1. The thiocarboxylated form serves as substrate for conjugation and oxidative stress specifically induces the formation of UBL-protein conjugates. The chain is Ubiquitin-related modifier 1 from Candida glabrata (strain ATCC 2001 / BCRC 20586 / JCM 3761 / NBRC 0622 / NRRL Y-65 / CBS 138) (Yeast).